The chain runs to 250 residues: Ubiquinone/menaquinone biosynthesis C-methyltransferase UbiE (250 aa).

S-adenosyl-L-methionine contacts are provided by residues T73, D94, 122–123 (NA), and S139.

The protein belongs to the class I-like SAM-binding methyltransferase superfamily. MenG/UbiE family.

It catalyses the reaction a 2-demethylmenaquinol + S-adenosyl-L-methionine = a menaquinol + S-adenosyl-L-homocysteine + H(+). The enzyme catalyses a 2-methoxy-6-(all-trans-polyprenyl)benzene-1,4-diol + S-adenosyl-L-methionine = a 5-methoxy-2-methyl-3-(all-trans-polyprenyl)benzene-1,4-diol + S-adenosyl-L-homocysteine + H(+). It functions in the pathway quinol/quinone metabolism; menaquinone biosynthesis; menaquinol from 1,4-dihydroxy-2-naphthoate: step 2/2. It participates in cofactor biosynthesis; ubiquinone biosynthesis. Functionally, methyltransferase required for the conversion of demethylmenaquinol (DMKH2) to menaquinol (MKH2) and the conversion of 2-polyprenyl-6-methoxy-1,4-benzoquinol (DDMQH2) to 2-polyprenyl-3-methyl-6-methoxy-1,4-benzoquinol (DMQH2). The chain is Ubiquinone/menaquinone biosynthesis C-methyltransferase UbiE from Francisella tularensis subsp. tularensis (strain WY96-3418).